The sequence spans 96 residues: UPF0251 protein Spea_3639 (96 aa).

Belongs to the UPF0251 family.

The chain is UPF0251 protein Spea_3639 from Shewanella pealeana (strain ATCC 700345 / ANG-SQ1).